The following is a 233-amino-acid chain: tRNA pseudouridine synthase B (233 aa).

Catalysis depends on aspartate 48, which acts as the Nucleophile.

It belongs to the pseudouridine synthase TruB family. Type 1 subfamily.

The enzyme catalyses uridine(55) in tRNA = pseudouridine(55) in tRNA. Its function is as follows. Responsible for synthesis of pseudouridine from uracil-55 in the psi GC loop of transfer RNAs. This is tRNA pseudouridine synthase B from Bacteroides fragilis (strain ATCC 25285 / DSM 2151 / CCUG 4856 / JCM 11019 / LMG 10263 / NCTC 9343 / Onslow / VPI 2553 / EN-2).